Reading from the N-terminus, the 98-residue chain is Ferredoxin-like protein (98 aa).

Residues 57–87 (GQVEVTADGCMECGTCRVLCEANGDVEWSYP) form the 4Fe-4S ferredoxin-type domain.

This sequence to ferredoxins from P.putida and C.tartarivorum, ferredoxin I from A.vinelandii, ferredoxin II from D.desulfuricans.

Functionally, could be a 3Fe-4S cluster-containing protein. This Rhizobium meliloti (strain 1021) (Ensifer meliloti) protein is Ferredoxin-like protein (fixX).